Reading from the N-terminus, the 180-residue chain is ADP ribosylation factor 4 (180 aa).

Residue Gly-2 is the site of N-myristoyl glycine attachment. Residues 24–31 (GLDAAGKT), 67–71 (DVGGQ), and 126–129 (NKQD) each bind GTP.

The protein belongs to the small GTPase superfamily. Arf family. Uniformly distributed throughout adults.

Its subcellular location is the golgi apparatus. GTP-binding protein involved in protein trafficking; may modulate vesicle budding and uncoating within the Golgi apparatus. This chain is ADP ribosylation factor 4, found in Drosophila melanogaster (Fruit fly).